The chain runs to 169 residues: MASFQDRAQHTIAQLDKELSKYPVLNNLERQTSVPKVYVILGLGGIYTFLVFFNIAGQLLVNLAGFILPTYYSLDALFSAGKADDTQWLTYWVVYAFFTVVESAISAPYWFPFYYIFKFALVLWLALPQTNGAQIVFKSLVQPLVGRYFTGGSTSANLRAQADAATKSQ.

The Cytoplasmic portion of the chain corresponds to Met1–Pro35. A helical transmembrane segment spans residues Lys36 to Ile55. Ala56 is a topological domain (lumenal). The helical transmembrane segment at Gly57–Ala76 threads the bilayer. Residues Leu77–Trp88 lie on the Cytoplasmic side of the membrane. Residues Leu89–Ser103 form a helical membrane-spanning segment. The Lumenal segment spans residues Ala104–Ile105. The chain crosses the membrane as a helical span at residues Ser106 to Trp124. Over Leu125–Gln169 the chain is Cytoplasmic.

This sequence belongs to the DP1 family. Oligomer.

It localises to the endoplasmic reticulum membrane. The protein localises to the golgi apparatus membrane. Functionally, required to generate and maintain the structure of the tubular endoplasmic reticulum network and the vacuole. Induces high curvature in membranes and causes membrane tubule formation. Involved in membrane/vesicle trafficking. This is Protein yop1 (yop1) from Emericella nidulans (strain FGSC A4 / ATCC 38163 / CBS 112.46 / NRRL 194 / M139) (Aspergillus nidulans).